Here is a 170-residue protein sequence, read N- to C-terminus: Adenine phosphoribosyltransferase (170 aa).

This sequence belongs to the purine/pyrimidine phosphoribosyltransferase family. In terms of assembly, homodimer.

Its subcellular location is the cytoplasm. The enzyme catalyses AMP + diphosphate = 5-phospho-alpha-D-ribose 1-diphosphate + adenine. It functions in the pathway purine metabolism; AMP biosynthesis via salvage pathway; AMP from adenine: step 1/1. In terms of biological role, catalyzes a salvage reaction resulting in the formation of AMP, that is energically less costly than de novo synthesis. This chain is Adenine phosphoribosyltransferase, found in Geobacillus kaustophilus (strain HTA426).